The chain runs to 92 residues: MELNILNKTNNELEVELRGETHTLLNLLKDLLIKDERVEAAFYDMKHVSISDPILYIKTDGTDPILVLKETAAIIIAQCDEFIDVFSKAANA.

This sequence belongs to the archaeal Rpo11/eukaryotic RPB11/RPC19 RNA polymerase subunit family. Part of the RNA polymerase complex.

It localises to the cytoplasm. It catalyses the reaction RNA(n) + a ribonucleoside 5'-triphosphate = RNA(n+1) + diphosphate. In terms of biological role, DNA-dependent RNA polymerase (RNAP) catalyzes the transcription of DNA into RNA using the four ribonucleoside triphosphates as substrates. The protein is DNA-directed RNA polymerase subunit Rpo11 of Methanosarcina acetivorans (strain ATCC 35395 / DSM 2834 / JCM 12185 / C2A).